The primary structure comprises 402 residues: CD2 homolog (402 aa).

Positions 1–16 (MIIIVIFLMCLKIVLN) are cleaved as a signal peptide. Residues 17–204 (NIIIWSTLNQ…ILKYQNYLST (188 aa)) lie on the Extracellular side of the membrane. Asn25, Asn37, Asn52, Asn55, Asn72, Asn77, Asn81, Asn89, Asn95, Asn108, Asn125, Asn137, Asn148, Asn153, Asn169, Asn177, Asn184, and Asn190 each carry an N-linked (GlcNAc...) asparagine; by host glycan. 2 disulfide bridges follow: Cys126–Cys191 and Cys133–Cys174. Residues 205–225 (LFYIIIFIVSGLIIGIFISII) form a helical membrane-spanning segment. Topologically, residues 226 to 402 (SVLSIRRKRK…ISLIHVDRII (177 aa)) are cytoplasmic. Residues 238 to 276 (VEEIESPPPSESNEEDISHDDTTSIHEPSPREPLLPKPY) are disordered. Positions 256–267 (HDDTTSIHEPSP) are enriched in basic and acidic residues. Repeat copies occupy residues 302-307 (KPCPPP), 308-313 (KPCPPP), 314-319 (KPCPPP), 320-325 (KPCPPP), 326-331 (KPCSPP), 332-337 (KPCRPP), 338-343 (KPCPPP), 344-349 (KPCPPP), 350-355 (KPCPPP), 356-361 (KPCPPS), and 362-367 (KPCPSP). Residues 302–367 (KPCPPPKPCP…CPPSKPCPSP (66 aa)) form an 11 X 6 AA tandem repeats of K-P-C-[PRS]-[P]-[PS] region. Residues 319-386 (PKPCPPPKPC…PSIPLLPNIP (68 aa)) show a composition bias toward pro residues. The tract at residues 319–388 (PKPCPPPKPC…IPLLPNIPPL (70 aa)) is disordered.

Belongs to the asfivirus CD2 homolog protein family. In terms of assembly, both glycosylated and nonglycosylated forms interact (via C-terminus) with the host AP-1 complex. Post-translationally, cleaved into two fragments of 63 kDa and 26 kDa containing respectively the glycosylated N-terminus and the nonglycosylated C-terminus. A full-length 89-kDa glycosylated form also exists.

It localises to the host cell membrane. It is found in the virion membrane. Its subcellular location is the host Golgi apparatus. Its function is as follows. May play an immunosuppressive role by inhibiting lymphocyte proliferation and subsequently facilitating viral replication and generalization of infection. Responsible for viral hemadsorption, which may help viral spread. Increases virus replication in the tick vector at the step of virus uptake or replication in the tick gut. May play a role in the host Golgi reorganization to yield viral factories. May play a role in host cell penetration. The protein is CD2 homolog of Ornithodoros (relapsing fever ticks).